We begin with the raw amino-acid sequence, 882 residues long: Formin-like protein 9 (882 aa).

An N-terminal signal peptide occupies residues 1 to 19; it reads MGMAMRCVLVLFSVSPVLL. The interval 67–92 is disordered; the sequence is SRGRRHKRYSEAPAPAPAPVPAHQAR. A helical membrane pass occupies residues 138–158; the sequence is IVALGVVGLCLVVLGVVIAAF. Disordered regions lie at residues 178–202, 293–316, and 401–471; these read RHGSRDQRSPAATRKVSSHPSPDPL, THDSPSDSSYQSLSPDCTSRLSPK, and TMTN…PLPR. Residues 298 to 308 show a composition bias toward low complexity; it reads SDSSYQSLSPD. The segment covering 427-441 has biased composition (pro residues); it reads KPAPPPPPQKNPPPN. The region spanning 462–882 is the FH2 domain; the sequence is VGKDGSPLPR…QTLNLVLPLK (421 aa).

It belongs to the formin-like family. Class-I subfamily.

The protein resides in the membrane. The sequence is that of Formin-like protein 9 (FH9) from Oryza sativa subsp. japonica (Rice).